The chain runs to 515 residues: 1-pyrroline-5-carboxylate dehydrogenase (515 aa).

Residues Glu286 and Cys320 contribute to the active site.

Belongs to the aldehyde dehydrogenase family. RocA subfamily.

It catalyses the reaction L-glutamate 5-semialdehyde + NAD(+) + H2O = L-glutamate + NADH + 2 H(+). It functions in the pathway amino-acid degradation; L-proline degradation into L-glutamate; L-glutamate from L-proline: step 2/2. This is 1-pyrroline-5-carboxylate dehydrogenase from Bacillus cytotoxicus (strain DSM 22905 / CIP 110041 / 391-98 / NVH 391-98).